A 455-amino-acid chain; its full sequence is Bifunctional protein GlmU (455 aa).

Residues 1–225 (MEVVILAAGQ…IWETLGVNSK (225 aa)) form a pyrophosphorylase region. Residues 6–9 (LAAG), Lys20, Gln71, 76–77 (GT), 98–100 (YGD), Gly135, Glu150, Asn165, and Asn223 contribute to the UDP-N-acetyl-alpha-D-glucosamine site. Residue Asp100 coordinates Mg(2+). Asn223 lines the Mg(2+) pocket. A linker region spans residues 226–246 (AQLAELERLHQRNIATRLMED). The N-acetyltransferase stretch occupies residues 247 to 455 (GVTLFDPSRI…KRPVKKKAGE (209 aa)). UDP-N-acetyl-alpha-D-glucosamine-binding residues include Arg329 and Lys347. His359 serves as the catalytic Proton acceptor. UDP-N-acetyl-alpha-D-glucosamine-binding residues include Tyr362 and Asn373. Residues Ala376, 382-383 (NY), Ser401, Ala419, and Arg436 contribute to the acetyl-CoA site.

It in the N-terminal section; belongs to the N-acetylglucosamine-1-phosphate uridyltransferase family. In the C-terminal section; belongs to the transferase hexapeptide repeat family. Homotrimer. Requires Mg(2+) as cofactor.

It is found in the cytoplasm. It carries out the reaction alpha-D-glucosamine 1-phosphate + acetyl-CoA = N-acetyl-alpha-D-glucosamine 1-phosphate + CoA + H(+). It catalyses the reaction N-acetyl-alpha-D-glucosamine 1-phosphate + UTP + H(+) = UDP-N-acetyl-alpha-D-glucosamine + diphosphate. It functions in the pathway nucleotide-sugar biosynthesis; UDP-N-acetyl-alpha-D-glucosamine biosynthesis; N-acetyl-alpha-D-glucosamine 1-phosphate from alpha-D-glucosamine 6-phosphate (route II): step 2/2. Its pathway is nucleotide-sugar biosynthesis; UDP-N-acetyl-alpha-D-glucosamine biosynthesis; UDP-N-acetyl-alpha-D-glucosamine from N-acetyl-alpha-D-glucosamine 1-phosphate: step 1/1. It participates in bacterial outer membrane biogenesis; LPS lipid A biosynthesis. Catalyzes the last two sequential reactions in the de novo biosynthetic pathway for UDP-N-acetylglucosamine (UDP-GlcNAc). The C-terminal domain catalyzes the transfer of acetyl group from acetyl coenzyme A to glucosamine-1-phosphate (GlcN-1-P) to produce N-acetylglucosamine-1-phosphate (GlcNAc-1-P), which is converted into UDP-GlcNAc by the transfer of uridine 5-monophosphate (from uridine 5-triphosphate), a reaction catalyzed by the N-terminal domain. This is Bifunctional protein GlmU from Aromatoleum aromaticum (strain DSM 19018 / LMG 30748 / EbN1) (Azoarcus sp. (strain EbN1)).